The following is a 689-amino-acid chain: DNA topoisomerase 1 (689 aa).

Residues 3–113 (DNLVIVESPA…KENRVVFNEI (111 aa)) enclose the Toprim domain. Residues Glu9 and Asp82 each contribute to the Mg(2+) site. Residues 129 to 557 (EMDLVDAQQA…FYNSFKQDVE (429 aa)) form the Topo IA-type catalytic domain. Positions 163 to 168 (SAGRVQ) are interaction with DNA. Tyr298 serves as the catalytic O-(5'-phospho-DNA)-tyrosine intermediate. 3 consecutive C4-type zinc fingers follow at residues 577–603 (CEVCGSPMVIKMGRYGKFMACSNFPDC), 617–645 (CPKCNEGDVVERKSKKNRIFYGCSRYPEC), and 658–681 (CPKCHHYLVNKKKGKSSQVVCSNC).

It belongs to the type IA topoisomerase family. As to quaternary structure, monomer. Requires Mg(2+) as cofactor.

The enzyme catalyses ATP-independent breakage of single-stranded DNA, followed by passage and rejoining.. Functionally, releases the supercoiling and torsional tension of DNA, which is introduced during the DNA replication and transcription, by transiently cleaving and rejoining one strand of the DNA duplex. Introduces a single-strand break via transesterification at a target site in duplex DNA. The scissile phosphodiester is attacked by the catalytic tyrosine of the enzyme, resulting in the formation of a DNA-(5'-phosphotyrosyl)-enzyme intermediate and the expulsion of a 3'-OH DNA strand. The free DNA strand then undergoes passage around the unbroken strand, thus removing DNA supercoils. Finally, in the religation step, the DNA 3'-OH attacks the covalent intermediate to expel the active-site tyrosine and restore the DNA phosphodiester backbone. In Staphylococcus epidermidis (strain ATCC 35984 / DSM 28319 / BCRC 17069 / CCUG 31568 / BM 3577 / RP62A), this protein is DNA topoisomerase 1.